Here is a 405-residue protein sequence, read N- to C-terminus: S-adenosylmethionine:tRNA ribosyltransferase-isomerase (405 aa).

The protein belongs to the QueA family. As to quaternary structure, monomer.

Its subcellular location is the cytoplasm. It catalyses the reaction 7-aminomethyl-7-carbaguanosine(34) in tRNA + S-adenosyl-L-methionine = epoxyqueuosine(34) in tRNA + adenine + L-methionine + 2 H(+). Its pathway is tRNA modification; tRNA-queuosine biosynthesis. In terms of biological role, transfers and isomerizes the ribose moiety from AdoMet to the 7-aminomethyl group of 7-deazaguanine (preQ1-tRNA) to give epoxyqueuosine (oQ-tRNA). The protein is S-adenosylmethionine:tRNA ribosyltransferase-isomerase of Psychrobacter cryohalolentis (strain ATCC BAA-1226 / DSM 17306 / VKM B-2378 / K5).